Consider the following 115-residue polypeptide: Cyclin-dependent protein kinase inhibitor SMR3 (115 aa).

A compositionally biased stretch (basic and acidic residues) spans 17–36; the sequence is KIRLPTRPELDIPDSDHEDP. The interval 17–82 is disordered; the sequence is KIRLPTRPEL…RSSGTKRKLT (66 aa). Basic residues predominate over residues 67–81; sequence RKPKPNRSSGTKRKL.

In terms of assembly, interacts with CDKA-1 and D-type cyclins. Expressed at low levels in roots and stems.

The protein resides in the nucleus. Its function is as follows. Probable cyclin-dependent protein kinase (CDK) inhibitor that functions as a repressor of mitosis in the endoreduplication cell cycle. This Arabidopsis thaliana (Mouse-ear cress) protein is Cyclin-dependent protein kinase inhibitor SMR3.